The sequence spans 89 residues: Myrmicitoxin(1)-Pm2a (89 aa).

A signal peptide spans 1–22 (MEIPKLLYIAVIAIGLSGSLTC). The propeptide occupies 23–61 (ATPLANPWGDPEAEANPEAKATAEATAEAIAEALAEPEP). Asn-88 is subject to Asparagine amide.

It belongs to the formicidae venom clade 1 family. As to expression, expressed by the venom gland.

It is found in the secreted. Functionally, toxin that potently modulates mammalian voltage-gated sodium (Nav) channels, reducing the voltage threshold for activation and inhibiting channel inactivation. Shows activity on hNav1.6/SCN8A (EC(50)=176 nM), mNav1.7/SCN9A (EC(50)=102 nM) and hNav1.7 (EC(50)=154 nM). In vivo, causes spontaneous, gradual and long-lasting nocifensive behaviors by intraplantar injection in mice, as well as pronounced swelling of the injected paw. Does not have effect on insects (blowflies). This is Myrmicitoxin(1)-Pm2a from Pogonomyrmex maricopa (Maricopa harvester ant).